The sequence spans 353 residues: Quinolinate synthase (353 aa).

The iminosuccinate site is built by His-47 and Ser-68. Cys-113 contributes to the [4Fe-4S] cluster binding site. Iminosuccinate-binding positions include Tyr-139–Asn-141 and Ser-156. Cys-200 contributes to the [4Fe-4S] cluster binding site. Residues His-226–Glu-228 and Thr-243 each bind iminosuccinate. [4Fe-4S] cluster is bound at residue Cys-297.

This sequence belongs to the quinolinate synthase family. Type 1 subfamily. [4Fe-4S] cluster is required as a cofactor.

The protein localises to the cytoplasm. The catalysed reaction is iminosuccinate + dihydroxyacetone phosphate = quinolinate + phosphate + 2 H2O + H(+). It functions in the pathway cofactor biosynthesis; NAD(+) biosynthesis; quinolinate from iminoaspartate: step 1/1. Catalyzes the condensation of iminoaspartate with dihydroxyacetone phosphate to form quinolinate. The chain is Quinolinate synthase from Yersinia pestis bv. Antiqua (strain Nepal516).